We begin with the raw amino-acid sequence, 751 residues long: Ribosome biogenesis protein ERB1 (751 aa).

Disordered stretches follow at residues 1–140 and 289–336; these read MALT…GNVP and SEPS…DPED. 2 stretches are compositionally biased toward acidic residues: residues 34 to 92 and 119 to 129; these read LTDE…SDSD and IEPDYDSDSST. Pro residues predominate over residues 294–305; the sequence is SQPPPLPAPKRP. Positions 323–336 are enriched in basic and acidic residues; it reads EEEKQEWLKQDPED. WD repeat units follow at residues 410–449, 536–580, 582–621, 622–661, 665–704, and 720–751; these read HPKGRARCVSVSPDGAWAVSGDEDGVVSLWEVNVGCEIRR, PSSG…APFK, IKGAVQQVLFHPIKPHFFVATQQYVRLYNLAEQKLIKTLQ, PGIRWISSMDVHPSGDHVIVGGYDRKLCWFDLELSEKPYK, YHSRAIRSLHFHPTYPLFASSSDDGSIQIFHARVYNDLMT, and TDGLGILQVKWTPKHPWLLSAAADGTVAVWCS.

The protein belongs to the WD repeat BOP1/ERB1 family. Component of the NOP7 complex, composed of ERB1, NOP7 and YTM1. The complex is held together by ERB1, which interacts with NOP7 via its N-terminal domain and with YTM1 via a high-affinity interaction between the seven-bladed beta-propeller domains of the 2 proteins. The NOP7 complex associates with the 66S pre-ribosome.

The protein localises to the nucleus. It is found in the nucleolus. Its subcellular location is the nucleoplasm. In terms of biological role, component of the NOP7 complex, which is required for maturation of the 25S and 5.8S ribosomal RNAs and formation of the 60S ribosome. The sequence is that of Ribosome biogenesis protein ERB1 from Coprinopsis cinerea (strain Okayama-7 / 130 / ATCC MYA-4618 / FGSC 9003) (Inky cap fungus).